Here is a 399-residue protein sequence, read N- to C-terminus: Methylthioribose kinase (399 aa).

ATP contacts are provided by residues N40, K57, and 111–113 (EDL). A substrate-binding site is contributed by D229. ATP is bound at residue 246 to 248 (DAE). Residue R344 coordinates substrate.

The protein belongs to the methylthioribose kinase family. In terms of assembly, homodimer.

It catalyses the reaction 5-(methylsulfanyl)-D-ribose + ATP = 5-(methylsulfanyl)-alpha-D-ribose 1-phosphate + ADP + H(+). It participates in amino-acid biosynthesis; L-methionine biosynthesis via salvage pathway; S-methyl-5-thio-alpha-D-ribose 1-phosphate from S-methyl-5'-thioadenosine (hydrolase route): step 2/2. Its function is as follows. Catalyzes the phosphorylation of methylthioribose into methylthioribose-1-phosphate. The chain is Methylthioribose kinase from Enterobacter sp. (strain 638).